A 151-amino-acid chain; its full sequence is Small ribosomal subunit protein uS13m (151 aa).

Belongs to the universal ribosomal protein uS13 family. Component of the mitochondrial small ribosomal subunit (mt-SSU). Mature yeast 74S mitochondrial ribosomes consist of a small (37S) and a large (54S) subunit. The 37S small subunit contains a 15S ribosomal RNA (15S mt-rRNA) and at least 32 different proteins. The 54S large subunit contains a 21S rRNA (21S mt-rRNA) and at least 45 different proteins.

It localises to the mitochondrion. Functionally, component of the mitochondrial ribosome (mitoribosome), a dedicated translation machinery responsible for the synthesis of mitochondrial genome-encoded proteins, including at least some of the essential transmembrane subunits of the mitochondrial respiratory chain. The mitoribosomes are attached to the mitochondrial inner membrane and translation products are cotranslationally integrated into the membrane. This is Small ribosomal subunit protein uS13m (sws2) from Schizosaccharomyces pombe (strain 972 / ATCC 24843) (Fission yeast).